A 331-amino-acid polypeptide reads, in one-letter code: Ferredoxin--NADP reductase 2 (331 aa).

The FAD site is built by E37, Q45, Y50, V90, F124, D286, and T327.

Belongs to the ferredoxin--NADP reductase type 2 family. Homodimer. The cofactor is FAD.

It catalyses the reaction 2 reduced [2Fe-2S]-[ferredoxin] + NADP(+) + H(+) = 2 oxidized [2Fe-2S]-[ferredoxin] + NADPH. In Listeria innocua serovar 6a (strain ATCC BAA-680 / CLIP 11262), this protein is Ferredoxin--NADP reductase 2.